Consider the following 912-residue polypeptide: Probable transmembrane GTPase FZO-like, chloroplastic (912 aa).

A chloroplast-targeting transit peptide spans 1-54 (MRTLISHRQCVTSPFLISAASPPFPGRCFKLSSFTPPRHRRFSSLSIRNISHES). The tract at residues 51–71 (SHESADQTSSSRPRTLYPGGY) is disordered. The Stromal segment spans residues 55 to 773 (ADQTSSSRPR…SKRLEQDIRE (719 aa)). GTP contacts are provided by residues 359 to 364 (NSGKST) and serine 521. Residues 774–794 (VFFVTVGGLGAAGLSASLLTS) form a helical membrane-spanning segment. Over 795 to 801 (VLPTTLE) the chain is Chloroplast intermembrane. Residues 802 to 822 (DLLALGLCSAGGYVAIANFPY) traverse the membrane as a helical segment. The Stromal portion of the chain corresponds to 823–912 (RRQAIIGKVN…LHVSRDEMRL (90 aa)). A coiled-coil region spans residues 877–904 (DRLLGIQKELSDIRSKLQLLQVDIDNLH).

This sequence belongs to the TRAFAC class dynamin-like GTPase superfamily. Dynamin/Fzo/YdjA family. Mitofusin subfamily.

The protein resides in the plastid. It localises to the chloroplast inner membrane. It is found in the chloroplast thylakoid membrane. Functionally, probable membrane-remodeling GTPase that plays a unique role in the in the determination of thylakoid and chloroplast morphology and regulates organization of the thylakoid network. Not involved in the determination of mitochondrial morphology or ultrastructure. This is Probable transmembrane GTPase FZO-like, chloroplastic from Arabidopsis thaliana (Mouse-ear cress).